The sequence spans 93 residues: Small ribosomal subunit protein bS16 (93 aa).

This sequence belongs to the bacterial ribosomal protein bS16 family.

In Dictyoglomus thermophilum (strain ATCC 35947 / DSM 3960 / H-6-12), this protein is Small ribosomal subunit protein bS16.